A 325-amino-acid polypeptide reads, in one-letter code: Ribosomal RNA small subunit methyltransferase C (325 aa).

This sequence belongs to the methyltransferase superfamily. RsmC family. Monomer.

The protein resides in the cytoplasm. It carries out the reaction guanosine(1207) in 16S rRNA + S-adenosyl-L-methionine = N(2)-methylguanosine(1207) in 16S rRNA + S-adenosyl-L-homocysteine + H(+). Functionally, specifically methylates the guanine in position 1207 of 16S rRNA in the 30S particle. This Alcanivorax borkumensis (strain ATCC 700651 / DSM 11573 / NCIMB 13689 / SK2) protein is Ribosomal RNA small subunit methyltransferase C.